The primary structure comprises 247 residues: Flagellar brake protein YcgR 2 (247 aa).

In terms of domain architecture, PilZ spans 124–237 (QRREYFRVET…DETRIQRYIA (114 aa)).

This sequence belongs to the YcgR family. Monomer. Interacts with the flagellar basal bodies.

It is found in the bacterial flagellum basal body. In terms of biological role, acts as a flagellar brake, regulating swimming and swarming in a bis-(3'-5') cyclic diguanylic acid (c-di-GMP)-dependent manner. Binds 1 c-di-GMP dimer per subunit. Increasing levels of c-di-GMP lead to decreased motility. This is Flagellar brake protein YcgR 2 from Dechloromonas aromatica (strain RCB).